The chain runs to 269 residues: Formamidopyrimidine-DNA glycosylase (269 aa).

Catalysis depends on Pro2, which acts as the Schiff-base intermediate with DNA. Glu3 acts as the Proton donor in catalysis. The active-site Proton donor; for beta-elimination activity is the Lys57. Residues His90, Arg109, and Lys150 each contribute to the DNA site. Residues 235 to 269 form an FPG-type zinc finger; sequence QVYGRKGEPCRVCGTPIAATKHAQRATFYCRHCQK. Arg259 acts as the Proton donor; for delta-elimination activity in catalysis.

Belongs to the FPG family. In terms of assembly, monomer. Requires Zn(2+) as cofactor.

It catalyses the reaction Hydrolysis of DNA containing ring-opened 7-methylguanine residues, releasing 2,6-diamino-4-hydroxy-5-(N-methyl)formamidopyrimidine.. The catalysed reaction is 2'-deoxyribonucleotide-(2'-deoxyribose 5'-phosphate)-2'-deoxyribonucleotide-DNA = a 3'-end 2'-deoxyribonucleotide-(2,3-dehydro-2,3-deoxyribose 5'-phosphate)-DNA + a 5'-end 5'-phospho-2'-deoxyribonucleoside-DNA + H(+). Involved in base excision repair of DNA damaged by oxidation or by mutagenic agents. Acts as a DNA glycosylase that recognizes and removes damaged bases. Has a preference for oxidized purines, such as 7,8-dihydro-8-oxoguanine (8-oxoG). Has AP (apurinic/apyrimidinic) lyase activity and introduces nicks in the DNA strand. Cleaves the DNA backbone by beta-delta elimination to generate a single-strand break at the site of the removed base with both 3'- and 5'-phosphates. The polypeptide is Formamidopyrimidine-DNA glycosylase (Salmonella paratyphi B (strain ATCC BAA-1250 / SPB7)).